Reading from the N-terminus, the 306-residue chain is NAD kinase 1 (306 aa).

Asp-67 acts as the Proton acceptor in catalysis. NAD(+) is bound by residues 67–68 (DG), 149–150 (NE), Asp-181, and 192–197 (TGYTVS).

The protein belongs to the NAD kinase family. The cofactor is a divalent metal cation.

The protein localises to the cytoplasm. The enzyme catalyses NAD(+) + ATP = ADP + NADP(+) + H(+). Functionally, involved in the regulation of the intracellular balance of NAD and NADP, and is a key enzyme in the biosynthesis of NADP. Catalyzes specifically the phosphorylation on 2'-hydroxyl of the adenosine moiety of NAD to yield NADP. The sequence is that of NAD kinase 1 from Trichormus variabilis (strain ATCC 29413 / PCC 7937) (Anabaena variabilis).